The following is a 186-amino-acid chain: Single-stranded DNA-binding protein 1 (186 aa).

Positions 1 to 108 (MDATVTVVGN…LEIDEIGPTL (108 aa)) constitute an SSB domain. The disordered stretch occupies residues 119–186 (TQAGHGVSPD…EDFDSDEVPF (68 aa)). Over residues 175-186 (SYEDFDSDEVPF) the composition is skewed to acidic residues.

Homotetramer.

This chain is Single-stranded DNA-binding protein 1 (ssb1), found in Tropheryma whipplei (strain Twist) (Whipple's bacillus).